Reading from the N-terminus, the 240-residue chain is Uridylate kinase (240 aa).

13–16 (KLSG) provides a ligand contact to ATP. The segment at 21–26 (GDDGFG) is involved in allosteric activation by GTP. Glycine 55 contacts UMP. ATP is bound by residues glycine 56 and arginine 60. UMP-binding positions include aspartate 75 and 136–143 (IGNPYFST). The ATP site is built by asparagine 164, tyrosine 170, and aspartate 173.

The protein belongs to the UMP kinase family. Homohexamer.

The protein resides in the cytoplasm. The catalysed reaction is UMP + ATP = UDP + ADP. It functions in the pathway pyrimidine metabolism; CTP biosynthesis via de novo pathway; UDP from UMP (UMPK route): step 1/1. Its activity is regulated as follows. Allosterically activated by GTP. Inhibited by UTP. In terms of biological role, catalyzes the reversible phosphorylation of UMP to UDP. This is Uridylate kinase from Staphylococcus saprophyticus subsp. saprophyticus (strain ATCC 15305 / DSM 20229 / NCIMB 8711 / NCTC 7292 / S-41).